Consider the following 506-residue polypeptide: Glycerol kinase (506 aa).

T12 provides a ligand contact to ADP. Residues T12, T13, and S14 each contribute to the ATP site. Position 12 (T12) interacts with sn-glycerol 3-phosphate. R16 lines the ADP pocket. R82, E83, Y134, and D246 together coordinate sn-glycerol 3-phosphate. The glycerol site is built by R82, E83, Y134, D246, and Q247. The ADP site is built by T268 and G312. ATP-binding residues include T268, G312, Q316, and G413. ADP is bound by residues G413 and N417.

The protein belongs to the FGGY kinase family.

It carries out the reaction glycerol + ATP = sn-glycerol 3-phosphate + ADP + H(+). It participates in polyol metabolism; glycerol degradation via glycerol kinase pathway; sn-glycerol 3-phosphate from glycerol: step 1/1. With respect to regulation, inhibited by fructose 1,6-bisphosphate (FBP). Its function is as follows. Key enzyme in the regulation of glycerol uptake and metabolism. Catalyzes the phosphorylation of glycerol to yield sn-glycerol 3-phosphate. In Leifsonia xyli subsp. xyli (strain CTCB07), this protein is Glycerol kinase.